A 206-amino-acid chain; its full sequence is Dual specificity phosphatase 29 (206 aa).

In terms of domain architecture, Tyrosine-protein phosphatase spans 47–194 (HVNQVWPSVY…LRALDITLQE (148 aa)). 138–145 (HCVMGRSR) contacts substrate. C139 (phosphocysteine intermediate) is an active-site residue.

It belongs to the protein-tyrosine phosphatase family. Non-receptor class dual specificity subfamily.

The protein localises to the cytoplasm. Its subcellular location is the nucleus. It catalyses the reaction O-phospho-L-tyrosyl-[protein] + H2O = L-tyrosyl-[protein] + phosphate. The catalysed reaction is O-phospho-L-seryl-[protein] + H2O = L-seryl-[protein] + phosphate. The enzyme catalyses O-phospho-L-threonyl-[protein] + H2O = L-threonyl-[protein] + phosphate. In terms of biological role, dual specificity phosphatase able to dephosphorylate phosphotyrosine, phosphoserine and phosphothreonine residues within the same substrate, with a preference for phosphotyrosine as a substrate. Involved in the modulation of AMPK and MAPK1/2 signaling pathways. The polypeptide is Dual specificity phosphatase 29 (dusp29) (Gasterosteus aculeatus (Three-spined stickleback)).